The chain runs to 306 residues: Pantothenate kinase (306 aa).

91–98 (GSVAVGKS) lines the ATP pocket.

It belongs to the prokaryotic pantothenate kinase family.

It localises to the cytoplasm. The catalysed reaction is (R)-pantothenate + ATP = (R)-4'-phosphopantothenate + ADP + H(+). The protein operates within cofactor biosynthesis; coenzyme A biosynthesis; CoA from (R)-pantothenate: step 1/5. The polypeptide is Pantothenate kinase (Streptococcus equi subsp. zooepidemicus (strain H70)).